The following is a 122-amino-acid chain: Large ribosomal subunit protein uL14 (122 aa).

Belongs to the universal ribosomal protein uL14 family. In terms of assembly, part of the 50S ribosomal subunit. Forms a cluster with proteins L3 and L19. In the 70S ribosome, L14 and L19 interact and together make contacts with the 16S rRNA in bridges B5 and B8.

Functionally, binds to 23S rRNA. Forms part of two intersubunit bridges in the 70S ribosome. This chain is Large ribosomal subunit protein uL14, found in Cytophaga hutchinsonii (strain ATCC 33406 / DSM 1761 / CIP 103989 / NBRC 15051 / NCIMB 9469 / D465).